The following is a 1361-amino-acid chain: Cell migration-inducing and hyaluronan-binding protein (1361 aa).

Positions 1–30 are cleaved as a signal peptide; that stretch reads MGAAGRQDFLFKAMLTISWLTLTCFPGATS. In terms of domain architecture, G8 spans 44 to 166; the sequence is QPWNPGHDQD…KKLSWTFLNK (123 aa). 5 N-linked (GlcNAc...) asparagine glycosylation sites follow: asparagine 119, asparagine 165, asparagine 312, asparagine 370, and asparagine 420. One can recognise a GG-type lectin 1 domain in the interval 176 to 317; that stretch reads GGYFFERSWG…GEYFNVSLSS (142 aa). Residues 295–591 are necessary for its endoplasmic reticulum (ER) retention and interaction with HSPA5; that stretch reads AAARVFKLFQ…IHHTFSRCVT (297 aa). PbH1 repeat units lie at residues 572 to 594, 595 to 617, 719 to 741, and 798 to 819; these read DPPT…TVHG, SNGL…FTED, IPLG…IIDN, and GGDV…TLAS. Residues asparagine 889 and asparagine 921 are each glycosylated (N-linked (GlcNAc...) asparagine). Positions 1227–1361 constitute a GG-type lectin 2 domain; that stretch reads NDFAYIEVDG…PIPVVKKKKL (135 aa).

This sequence belongs to the CEMIP family. In terms of assembly, interacts with EPHA2 and ITPR3. Interacts with HSPA5/BIP; the interaction induces calcium leakage from the endoplasmic reticulum and cell migration. Interacts with clathrin heavy chain/CLTC. Post-translationally, N-glycosylated; glycosylation is not necessary for HA-binding. As to expression, expressed in dermal and in synovial fibroblasts. Strongly expressed in gastric cancers compared with the paired normal tissues. Strongly expressed in both ductal carcinoma and invasive breast cancer cells compared with benign epithelial cells (at protein level). Strongly expressed in brain, placenta, prostate, breast, lung and testis. Expressed in fibroblasts, epithelial cells and cancer cells. In ear, it is specifically expressed in inner ear. Expressed in cochlea and vestibule tissues. Strongly expressed in gastric cancers compared with the paired normal tissues. Strongly expressed in colon adenocarcinomas compared with normal colonic mucosas. Strongly expressed in breast cancer as compared to normal breast tissue.

The protein resides in the nucleus. It localises to the cytoplasm. Its subcellular location is the endoplasmic reticulum. It is found in the cell membrane. The protein localises to the membrane. The protein resides in the clathrin-coated pit. It localises to the secreted. It catalyses the reaction Random hydrolysis of (1-&gt;4)-linkages between N-acetyl-beta-D-glucosamine and D-glucuronate residues in hyaluronate.. Its activity is regulated as follows. Activity is up-regulated by histamine. Mediates depolymerization of hyaluronic acid (HA) via the cell membrane-associated clathrin-coated pit endocytic pathway. Binds to hyaluronic acid. Hydrolyzes high molecular weight hyaluronic acid to produce an intermediate-sized product, a process that may occur through rapid vesicle endocytosis and recycling without intracytoplasmic accumulation or digestion in lysosomes. Involved in hyaluronan catabolism in the dermis of the skin and arthritic synovium. Positively regulates epithelial-mesenchymal transition (EMT), and hence tumor cell growth, invasion and cancer dissemination. In collaboration with HSPA5/BIP, promotes cancer cell migration in a calcium and PKC-dependent manner. May be involved in hearing. This chain is Cell migration-inducing and hyaluronan-binding protein, found in Homo sapiens (Human).